The chain runs to 271 residues: Zinc finger protein 501 (271 aa).

9 consecutive C2H2-type zinc fingers follow at residues 22 to 44, 50 to 72, 78 to 100, 106 to 128, 134 to 156, 162 to 184, 190 to 212, 218 to 240, and 246 to 268; these read SKCS…QRIH, YVCS…LRIH, YKCN…LRIH, YKCN…QRIH, YKCT…QRSH, FKCN…QRIH, YTCT…ERTH, YKCS…YRIH, and YECV…QRLH.

The protein belongs to the krueppel C2H2-type zinc-finger protein family.

The protein resides in the nucleus. Its subcellular location is the nucleolus. Functionally, may be involved in transcriptional regulation. Essential for Golgi structural integrity. The protein is Zinc finger protein 501 (ZNF501) of Homo sapiens (Human).